We begin with the raw amino-acid sequence, 455 residues long: MIDIKLIRENPDLIKGDLIKRGELEKLRWIDEILELDKKWRENLKEINNLRRERNKLAIEIGKRKKSGEAIDELIKKSDNIAKRIEEIEKENNIIREKIDYYLWRLPNITHESVPIGKDDTENVPIRFWGKARVWEGHLETFLEQSQGKMKYETITWKPELHADLLPKIGGADLERAAKVSGARFFYLLNELVILDLSLIRFALDKLIEKGFIPVIPPYMVRKYVEEGVTSFGDFEDVIYKIEGEDLYLIPTSEHPLAGMHSNEILDGHNLPILYAGVSPCFRKEAGTAGKDTKGIFRVHQFHKVEQFVYARPEESWEWHEKLLQNAEEIFQALEIPYRIVNICTGDLGYAAAKKYDIEAWMSAQGKFREVVSCSNCTEWQARRLNIRFRDKPNEKPRFVHTLNSTAIATSRAIVAIIENFQEEDGTVKIPKALWPYTGFKEILPVDKREKCCQS.

252-254 (TSE) contributes to the L-serine binding site. ATP-binding positions include 283 to 285 (RKE) and Val299. Glu306 lines the L-serine pocket. 370–373 (EVVS) serves as a coordination point for ATP. Thr406 is an L-serine binding site.

This sequence belongs to the class-II aminoacyl-tRNA synthetase family. Type-1 seryl-tRNA synthetase subfamily. As to quaternary structure, homodimer. The tRNA molecule binds across the dimer.

It localises to the cytoplasm. It carries out the reaction tRNA(Ser) + L-serine + ATP = L-seryl-tRNA(Ser) + AMP + diphosphate + H(+). The enzyme catalyses tRNA(Sec) + L-serine + ATP = L-seryl-tRNA(Sec) + AMP + diphosphate + H(+). Its pathway is aminoacyl-tRNA biosynthesis; selenocysteinyl-tRNA(Sec) biosynthesis; L-seryl-tRNA(Sec) from L-serine and tRNA(Sec): step 1/1. In terms of biological role, catalyzes the attachment of serine to tRNA(Ser). Is also able to aminoacylate tRNA(Sec) with serine, to form the misacylated tRNA L-seryl-tRNA(Sec), which will be further converted into selenocysteinyl-tRNA(Sec). The sequence is that of Serine--tRNA ligase from Thermococcus sibiricus (strain DSM 12597 / MM 739).